We begin with the raw amino-acid sequence, 311 residues long: MSDFTLNGIKVEDTFAEAFDVAGTAIIVTNDTPKWAMIAATVMTGFATSVIGCGAEAGIDAELSPDETPDGRPGVRILLFGFEPNGLKDQLLKRVGQCILTCPGTACFAGVEGPTKIKLGGAIRYFGDGFAVAKRLPDHEGKMRRYWRIPVMDGEFLCEDSVRAVDGAVGGGNLLFLGRKHADTLIVAEIAVEAAKAIPGAILPFPGGIVRSGSKVGGRTKGMMASTNDAYCPTLKGRAGSALPPECGVVLEIVIDALTSAAVAESMRAALHAATEIGAQHGLVAVTAGNYGGNLGRHHYHLRDLLEKPAA.

It belongs to the FTR family. As to quaternary structure, homotetramer. Octaheteromer. Part of the formyltransferase/hydrolase complex fhc; composed of FhcA, FhcB, FhcC and FhcD.

The protein localises to the cytoplasm. The catalysed reaction is N-formylmethanofuran + 5,6,7,8-tetrahydromethanopterin + H(+) = N(5)-formyl-5,6,7,8-tetrahydromethanopterin + methanofuran. The protein operates within one-carbon metabolism; formaldehyde degradation; formate from formaldehyde (H(4)MPT route): step 4/5. Involved in the transformation of 5-formyl tetrahydromethanopterin (5-formyl-H(4)MPT) to methanofuran (MFR) and formate via the intermediate formylmethanofuran (formyl-MFR). Catalyzes the transfer of a formyl group from 5-formyl-H(4)MPT to MFR to produce tetrahydromethanopterin (H(4)MPT) and formyl-MFR, which is then hydrolyzed to formate and MFR. The sequence is that of Formyltransferase/hydrolase complex subunit D from Methylorubrum extorquens (strain ATCC 14718 / DSM 1338 / JCM 2805 / NCIMB 9133 / AM1) (Methylobacterium extorquens).